A 443-amino-acid polypeptide reads, in one-letter code: Signal recognition particle 54 kDa protein (443 aa).

GTP-binding positions include 104-111, 184-188, and 242-245; these read GLQGSGKT, DTAGR, and TKLD.

Belongs to the GTP-binding SRP family. SRP54 subfamily. In terms of assembly, part of the signal recognition particle protein translocation system, which is composed of SRP and FtsY. Archaeal SRP consists of a 7S RNA molecule of 300 nucleotides and two protein subunits: SRP54 and SRP19.

It is found in the cytoplasm. The catalysed reaction is GTP + H2O = GDP + phosphate + H(+). In terms of biological role, involved in targeting and insertion of nascent membrane proteins into the cytoplasmic membrane. Binds to the hydrophobic signal sequence of the ribosome-nascent chain (RNC) as it emerges from the ribosomes. The SRP-RNC complex is then targeted to the cytoplasmic membrane where it interacts with the SRP receptor FtsY. The chain is Signal recognition particle 54 kDa protein from Methanosarcina mazei (strain ATCC BAA-159 / DSM 3647 / Goe1 / Go1 / JCM 11833 / OCM 88) (Methanosarcina frisia).